Reading from the N-terminus, the 1241-residue chain is Nephrin (1241 aa).

The signal sequence occupies residues 1 to 22; the sequence is MALGTTLRASLLLLGLLTEGLA. Residues 23 to 1055 are Extracellular-facing; it reads QLAIPASVPR…EDQLPTEPPS (1033 aa). 6 Ig-like C2-type domains span residues 27–130, 143–234, 242–333, 340–434, 440–540, and 544–635; these read PASV…VILS, EAGT…SFTV, PPVI…HGIT, PSAI…KSLI, PAQK…TQLA, and PPTN…ETVS. N-linked (GlcNAc...) asparagine glycosylation occurs at Asn40. Disulfide bonds link Cys53–Cys111, Cys160–Cys217, and Cys265–Cys317. 2 N-linked (GlcNAc...) asparagine glycosylation sites follow: Asn356 and Asn401. A disulfide bond links Cys361 and Cys417. At Ser432 the chain carries Phosphoserine. The cysteines at positions 465 and 528 are disulfide-linked. N-linked (GlcNAc...) asparagine glycans are attached at residues Asn547, Asn553, Asn564, Asn577, Asn680, and Asn708. An intrachain disulfide couples Cys567 to Cys623. 2 Ig-like C2-type domains span residues 740-832 and 838-939; these read PTIR…LLRL and PQVE…VSIS. 2 disulfides stabilise this stretch: Cys761–Cys816 and Cys863–Cys920. An N-linked (GlcNAc...) asparagine glycan is attached at Asn908. The Fibronectin type-III domain maps to 943–1038; it reads PPSGLKVVSL…TQLPITTPGL (96 aa). Positions 1025-1057 are disordered; the sequence is ADKGTQLPITTPGLHQPSGEPEDQLPTEPPSGP. The helical transmembrane segment at 1056 to 1076 threads the bilayer; it reads GPSGLPLLPVLFALGGLLLLS. Residues 1077–1241 lie on the Cytoplasmic side of the membrane; the sequence is NASCVGGVLW…LPFELRGHLV (165 aa). At Ser1098 the chain carries Phosphoserine. Residues 1099–1114 show a composition bias toward basic and acidic residues; it reads EKTEAGSEEDRVRNEY. Positions 1099 to 1137 are disordered; it reads EKTEAGSEEDRVRNEYEESQWTGERDTQSSTVSTTEAEP. Thr1101 carries the post-translational modification Phosphothreonine. Residue Ser1105 is modified to Phosphoserine. The interval 1160-1241 is binds to NPHS2; that stretch reads RGFTGEDEDM…LPFELRGHLV (82 aa). Tyr1193 carries the phosphotyrosine; by FYN modification.

The protein belongs to the immunoglobulin superfamily. In terms of assembly, interacts with CD2AP (via C-terminal domain). Interacts with MAGI1 (via PDZ 2 and 3 domains) forming a tripartite complex with IGSF5/JAM4. Interacts with DDN; the interaction is direct. Self-associates (via the Ig-like domains). Also interacts (via the Ig-like domains) with KIRREL1/NEPH1 and KIRREL2; the interaction with KIRREL1 is dependent on KIRREL1 glycosylation. Interacts with KIRREL3. Forms a complex with ACTN4, CASK, IQGAP1, MAGI2, SPTAN1 and SPTBN1. Interacts with NPHS2. Interacts with phosphatidylinositol 3-kinase regulatory subunit PIK3R1; the interaction is reduced by high glucose levels. Post-translationally, phosphorylated at Tyr-1193 by FYN, leading to the recruitment and activation of phospholipase C-gamma-1/PLCG1. Tyrosine phosphorylation is reduced by high glucose levels. Dephosphorylated by tensin TNS2 which leads to reduced binding of NPHN1 to PIK3R1. In terms of tissue distribution, specifically expressed in podocytes of kidney glomeruli.

It is found in the cell membrane. Functionally, seems to play a role in the development or function of the kidney glomerular filtration barrier. Regulates glomerular vascular permeability. May anchor the podocyte slit diaphragm to the actin cytoskeleton. Plays a role in skeletal muscle formation through regulation of myoblast fusion. This is Nephrin (NPHS1) from Homo sapiens (Human).